Reading from the N-terminus, the 342-residue chain is Uroporphyrinogen decarboxylase (342 aa).

Substrate-binding positions include 22–26, Phe42, Asp72, Tyr146, Ser201, and His317; that span reads RQAGR.

The protein belongs to the uroporphyrinogen decarboxylase family. Homodimer.

The protein resides in the cytoplasm. It catalyses the reaction uroporphyrinogen III + 4 H(+) = coproporphyrinogen III + 4 CO2. The protein operates within porphyrin-containing compound metabolism; protoporphyrin-IX biosynthesis; coproporphyrinogen-III from 5-aminolevulinate: step 4/4. Its function is as follows. Catalyzes the decarboxylation of four acetate groups of uroporphyrinogen-III to yield coproporphyrinogen-III. This is Uroporphyrinogen decarboxylase from Orientia tsutsugamushi (strain Ikeda) (Rickettsia tsutsugamushi).